The following is a 237-amino-acid chain: ADTIVAVELDSYPNTDIGDPNYPHIGIDIKSIRSKSTARWNMQTGKVGTVHISYNSVAKRLSAVVSYSGSSSTTVSYDVDLNNVLPEWVRVGLSATTGLYKETNTILSWSFTSKLKTNSIADENSLHFSFHKFSQNPKDLILQGDAFTDSDGNLELTKVSSSGDPQGNSVGRALFYAPVHIWESSAVVASFDATFTFLIKSPDREPADGITFFIANTDTSIPSGSGGRLLGLFPDAN.

Mn(2+) is bound by residues glutamate 8 and aspartate 10. The Ca(2+) site is built by aspartate 10, tyrosine 12, asparagine 14, and aspartate 19. An a carbohydrate-binding site is contributed by tyrosine 12. Mn(2+)-binding residues include aspartate 19, histidine 24, and serine 34. Residue 99-100 (LY) coordinates a carbohydrate. Ca(2+) is bound at residue aspartate 208. Arginine 228 serves as a coordination point for a carbohydrate.

Belongs to the leguminous lectin family. In terms of assembly, homotetramer. In terms of processing, the beta and gamma chains are produced by partial proteolytic processing of the lectin alpha chain by an asparaginyl endopeptidase. Mixture of 60% alpha lectin and 40% of its beta and gamma proteolytic fragments.

In terms of biological role, D-mannose/D-glucose-binding lectin. Has anti-inflammatory activity in rats. Induces histamine release in mast cells from rat. Induces lymphocyte proliferation and IFNG production. Shows toxicity against the aquatic snail B.glabrata at concentrations higher than 50 ug/ml. In Dioclea grandiflora (Mucana), this protein is Lectin alpha chain.